A 39-amino-acid polypeptide reads, in one-letter code: Sarcotoxin-1C (39 aa).

Position 39 is an arginine amide (Arg39).

Belongs to the cecropin family.

It is found in the secreted. Functionally, sarcotoxins, which are potent bactericidal proteins, are produced in response to injury. They are cytotoxic to both Gram-positive and Gram-negative bacteria. The sequence is that of Sarcotoxin-1C from Sarcophaga peregrina (Flesh fly).